Consider the following 274-residue polypeptide: Large ribosomal subunit protein bL28m (274 aa).

The interval 249–274 (SETEEFGLGQEEDLFMKEEPKPTKMA) is disordered. A compositionally biased stretch (basic and acidic residues) spans 262-274 (LFMKEEPKPTKMA).

The protein belongs to the bacterial ribosomal protein bL28 family. Component of the mitochondrial large ribosomal subunit (mt-LSU). Mature N.crassa 74S mitochondrial ribosomes consist of a small (37S) and a large (54S) subunit. The 37S small subunit contains a 16S ribosomal RNA (16S mt-rRNA) and 32 different proteins. The 54S large subunit contains a 23S rRNA (23S mt-rRNA) and 42 different proteins.

The protein localises to the mitochondrion. In terms of biological role, component of the mitochondrial ribosome (mitoribosome), a dedicated translation machinery responsible for the synthesis of mitochondrial genome-encoded proteins, including at least some of the essential transmembrane subunits of the mitochondrial respiratory chain. The mitoribosomes are attached to the mitochondrial inner membrane and translation products are cotranslationally integrated into the membrane. This is Large ribosomal subunit protein bL28m (mrpl24) from Neurospora crassa (strain ATCC 24698 / 74-OR23-1A / CBS 708.71 / DSM 1257 / FGSC 987).